The primary structure comprises 158 residues: RNA pyrophosphohydrolase (158 aa).

Residues 6–150 (GYRLNVGIVL…KRDVYRKVMQ (145 aa)) enclose the Nudix hydrolase domain. Positions 39–60 (GGINIGETPEQAMYRELFEEIG) match the Nudix box motif.

It belongs to the Nudix hydrolase family. RppH subfamily. The cofactor is a divalent metal cation.

Its function is as follows. Accelerates the degradation of transcripts by removing pyrophosphate from the 5'-end of triphosphorylated RNA, leading to a more labile monophosphorylated state that can stimulate subsequent ribonuclease cleavage. The chain is RNA pyrophosphohydrolase from Blochmanniella pennsylvanica (strain BPEN).